Consider the following 306-residue polypeptide: Protoheme IX farnesyltransferase (306 aa).

9 consecutive transmembrane segments (helical) span residues 32–52 (VVALLVLTALVGMSLSVPGAL), 58–78 (IPAMLGIGLLSSAAAAINHIV), 103–123 (NAIVFATSIALLGFIILYALV), 126–146 (LTAFLTLAGLVGYSFVYTMYL), 153–173 (NITIGGLAGAIPPLLGWTAMT), 180–200 (ALLLVLIIFTWTPPHFWALAI), 227–247 (ILLYTVLLFVVCLLPYLVGMS), 249–269 (WLYLIGACSLNLIFFGYAWQL), and 278–298 (AMATFKFSIIHLMLLFIILLL).

This sequence belongs to the UbiA prenyltransferase family. Protoheme IX farnesyltransferase subfamily.

It localises to the cell inner membrane. It catalyses the reaction heme b + (2E,6E)-farnesyl diphosphate + H2O = Fe(II)-heme o + diphosphate. It functions in the pathway porphyrin-containing compound metabolism; heme O biosynthesis; heme O from protoheme: step 1/1. Converts heme B (protoheme IX) to heme O by substitution of the vinyl group on carbon 2 of heme B porphyrin ring with a hydroxyethyl farnesyl side group. This is Protoheme IX farnesyltransferase from Colwellia psychrerythraea (strain 34H / ATCC BAA-681) (Vibrio psychroerythus).